Reading from the N-terminus, the 150-residue chain is Large ribosomal subunit protein bL9 (150 aa).

Belongs to the bacterial ribosomal protein bL9 family.

Binds to the 23S rRNA. This chain is Large ribosomal subunit protein bL9, found in Leptothrix cholodnii (strain ATCC 51168 / LMG 8142 / SP-6) (Leptothrix discophora (strain SP-6)).